A 96-amino-acid polypeptide reads, in one-letter code: MDFNASLRKAIKTGDVLLGQNSTAECIKDGKAQMIVVAANCPSTYRTMLDEQNDVYVHTYEGSSMQLGKACGKPFMVSALAIVNAGESDIISLKRA.

Belongs to the eukaryotic ribosomal protein eL30 family.

This chain is Large ribosomal subunit protein eL30, found in Methanosphaerula palustris (strain ATCC BAA-1556 / DSM 19958 / E1-9c).